The sequence spans 364 residues: Chorismate synthase (364 aa).

Positions 48 and 54 each coordinate NADP(+). FMN contacts are provided by residues 125 to 127, 238 to 239, glycine 278, 293 to 297, and arginine 319; these read RSS, NA, and KPTSS.

It belongs to the chorismate synthase family. In terms of assembly, homotetramer. FMNH2 is required as a cofactor.

It carries out the reaction 5-O-(1-carboxyvinyl)-3-phosphoshikimate = chorismate + phosphate. Its pathway is metabolic intermediate biosynthesis; chorismate biosynthesis; chorismate from D-erythrose 4-phosphate and phosphoenolpyruvate: step 7/7. Catalyzes the anti-1,4-elimination of the C-3 phosphate and the C-6 proR hydrogen from 5-enolpyruvylshikimate-3-phosphate (EPSP) to yield chorismate, which is the branch point compound that serves as the starting substrate for the three terminal pathways of aromatic amino acid biosynthesis. This reaction introduces a second double bond into the aromatic ring system. The chain is Chorismate synthase from Shewanella sediminis (strain HAW-EB3).